Consider the following 268-residue polypeptide: Glucosamine-6-phosphate deaminase (268 aa).

Asp72 acts as the Proton acceptor; for enolization step in catalysis. Catalysis depends on Asp141, which acts as the For ring-opening step. His143 serves as the catalytic Proton acceptor; for ring-opening step. Glu148 acts as the For ring-opening step in catalysis.

It belongs to the glucosamine/galactosamine-6-phosphate isomerase family. NagB subfamily.

It catalyses the reaction alpha-D-glucosamine 6-phosphate + H2O = beta-D-fructose 6-phosphate + NH4(+). Its pathway is amino-sugar metabolism; N-acetylneuraminate degradation; D-fructose 6-phosphate from N-acetylneuraminate: step 5/5. Allosterically activated by N-acetylglucosamine 6-phosphate (GlcNAc6P). Functionally, catalyzes the reversible isomerization-deamination of glucosamine 6-phosphate (GlcN6P) to form fructose 6-phosphate (Fru6P) and ammonium ion. In Borreliella afzelii (strain PKo) (Borrelia afzelii), this protein is Glucosamine-6-phosphate deaminase.